A 285-amino-acid polypeptide reads, in one-letter code: N(G),N(G)-dimethylarginine dimethylaminohydrolase 1 (285 aa).

Alanine 2 carries the post-translational modification N-acetylalanine. Substrate contacts are provided by residues leucine 30, aspartate 73, 78–79 (ED), arginine 98, and arginine 145. The active-site Proton donor is the histidine 173. Cysteine 222 bears the S-nitrosocysteine mark. Valine 268 is a binding site for substrate. The residue at position 274 (cysteine 274) is an S-nitrosocysteine. Cysteine 274 serves as the catalytic Nucleophile. Cysteine 274 is a binding site for Zn(2+).

It belongs to the DDAH family. In terms of assembly, monomer. Detected in brain, liver, kidney and pancreas, and at low levels in skeletal muscle.

It catalyses the reaction N(omega),N(omega)-dimethyl-L-arginine + H2O = dimethylamine + L-citrulline. The enzyme catalyses N(omega)-methyl-L-arginine + H2O = L-citrulline + methylamine. With respect to regulation, inhibited by zinc ions. Enzyme purified in the absence of 1,10-phenanthroline contains on average 0.4 zinc atoms per subunit. Inhibited by 4-hydroxy-nonenal through the formation of a covalent adduct with His-173. Competitively inhibited by N(5)-iminopropyl-ornithine. Functionally, hydrolyzes N(G),N(G)-dimethyl-L-arginine (ADMA) and N(G)-monomethyl-L-arginine (MMA) which act as inhibitors of NOS. Has therefore a role in the regulation of nitric oxide generation. In Homo sapiens (Human), this protein is N(G),N(G)-dimethylarginine dimethylaminohydrolase 1.